The chain runs to 652 residues: MKKEQYIKAVELLNLYSYHYYVLDDAITTDEVYDKLYHEVLEYEESHKEDILKNSPTQRVGDTVSEGFSKAPHLSRMWSLEDVFDSDGLQKWLIKTYKLDSNISFYCEPKYDGASLNLIYENGELSQAITRGDGEVGELITQNVKTIRSVPLSIEHKEKIEIRGEVVIFKDEFEKINQTRLKDGEALFANPRNAAAGSLRQLDSSITASRNLVFLPYGVGENFLEHKLLSQKMEYIYSLGFKKPPFCATCKDFNEIEAVYQEMSRNRDSYPMMLDGMVVKVDEIAAQIDMGYTVKNPRFSVAYKFPAVEKITTIKEIILQVGRTGAVTPVAIVEPTNIDGVVVERATLHNFDEIQRKDIRINDHVIILRSGDVIPKIIKVLTHERDGSEVEYKRPTICPVCESELLDEGVLLKCQNLTCEARVINSIIYFASKPCLNIDGLGVKIVEALFNSGLVKSVVDLFDLTLEKLLTLEGFKEKKAQNLLDALGSAKGCEYWRFVNSLGIEHIGEVASKTLSAKFGSGFIDATKDEIVACDGVGEEMAESLLEFIRVNRETILKLQNILKPLEPLQRQEAKENPFKGKSVVLTGSMSESRDMIKEMLESLGAKVVSSVSKKTDFVIYGEDAGSKYDKAMDLGVECLNEDEMRSKIEQA.

Residues 30-34, 79-80, and Glu-108 each bind NAD(+); these read DEVYD and SL. Lys-110 serves as the catalytic N6-AMP-lysine intermediate. NAD(+) contacts are provided by Arg-131, Glu-165, Lys-280, and Lys-304. Zn(2+) is bound by residues Cys-398, Cys-401, Cys-414, and Cys-419. The BRCT domain occupies 574-652; that stretch reads AKENPFKGKS…DEMRSKIEQA (79 aa).

This sequence belongs to the NAD-dependent DNA ligase family. LigA subfamily. Mg(2+) serves as cofactor. Mn(2+) is required as a cofactor.

It carries out the reaction NAD(+) + (deoxyribonucleotide)n-3'-hydroxyl + 5'-phospho-(deoxyribonucleotide)m = (deoxyribonucleotide)n+m + AMP + beta-nicotinamide D-nucleotide.. Functionally, DNA ligase that catalyzes the formation of phosphodiester linkages between 5'-phosphoryl and 3'-hydroxyl groups in double-stranded DNA using NAD as a coenzyme and as the energy source for the reaction. It is essential for DNA replication and repair of damaged DNA. The chain is DNA ligase from Sulfurimonas denitrificans (strain ATCC 33889 / DSM 1251) (Thiomicrospira denitrificans (strain ATCC 33889 / DSM 1251)).